The following is a 522-amino-acid chain: BAR/IMD domain-containing adapter protein 2-like 2 (522 aa).

In terms of domain architecture, IMD spans 1–239 (MAPEMDQFYR…HSPGLLGPAL (239 aa)). 2 disordered regions span residues 220–325 (SEAS…GGGG) and 404–502 (PMSP…GTNP). S231, S272, and S303 each carry phosphoserine. The segment covering 297 to 317 (RTPSASSLYASSTQRSRSNSF) has biased composition (polar residues). The region spanning 324–387 (GGARRVRALV…PEAYVKPVEE (64 aa)) is the SH3 domain. Positions 443–456 (SQSRSRTPSRVPSR) are enriched in low complexity. Positions 457–466 (APSPAPPPLP) are enriched in pro residues. S472 and S475 each carry phosphoserine.

As to expression, expressed in the epithelial layer of the intestine and in the kidney.

The protein localises to the cell membrane. The protein resides in the cell junction. It localises to the cytoplasmic vesicle membrane. Its function is as follows. Phosphoinositides-binding protein that induces the formation of planar or gently curved membrane structures. Binds to phosphoinositides, including to phosphatidylinositol 4,5-bisphosphate (PtdIns(4,5)P2) headgroups. There seems to be no clear preference for a specific phosphoinositide. This is BAR/IMD domain-containing adapter protein 2-like 2 (Baiap2l2) from Mus musculus (Mouse).